Reading from the N-terminus, the 203-residue chain is Serine hydrolase-like protein (203 aa).

An AB hydrolase-1 domain is found at 33–145 (PPVLCLHGWL…FLLESDEMEN (113 aa)). Residue Ser108 is part of the active site.

It belongs to the AB hydrolase superfamily.

Putative serine hydrolase. This is Serine hydrolase-like protein (SERHL) from Homo sapiens (Human).